The primary structure comprises 33 residues: Protamine-M6/M7 (33 aa).

Residues 1-33 (PRRRRETSRPIRRRRRARRAPIRRRRRVVRRRR) are disordered.

As to expression, testis.

Its subcellular location is the nucleus. It localises to the chromosome. Protamines substitute for histones in the chromatin of sperm during the haploid phase of spermatogenesis. They compact sperm DNA into a highly condensed, stable and inactive complex. The protein is Protamine-M6/M7 of Mugil cephalus (Flathead mullet).